The following is a 122-amino-acid chain: Ribosome-binding factor A (122 aa).

Belongs to the RbfA family. In terms of assembly, monomer. Binds 30S ribosomal subunits, but not 50S ribosomal subunits or 70S ribosomes.

The protein resides in the cytoplasm. Its function is as follows. One of several proteins that assist in the late maturation steps of the functional core of the 30S ribosomal subunit. Associates with free 30S ribosomal subunits (but not with 30S subunits that are part of 70S ribosomes or polysomes). Required for efficient processing of 16S rRNA. May interact with the 5'-terminal helix region of 16S rRNA. This chain is Ribosome-binding factor A, found in Geotalea uraniireducens (strain Rf4) (Geobacter uraniireducens).